The chain runs to 123 residues: Major pollen allergen Ole e 10 (123 aa).

Residues 1 to 21 (MRGTAGVPDQPVPTPTPSVPT) form the signal peptide. A disordered region spans residues 1–37 (MRGTAGVPDQPVPTPTPSVPTSSSPVPKPPTQGNKKW). A disulfide bridge connects residues cysteine 38 and cysteine 101.

Post-translationally, the N-terminus is blocked. In terms of processing, phosphorylated at Ser-24 when expressed as a recombinant protein in a heterologous system. Not glycosylated. Post-translationally, contains two additional disulfide bonds. In terms of tissue distribution, expressed in mature and germinating pollen.

The protein localises to the cytoplasmic vesicle. In terms of biological role, carbohydrate-binding protein binding preferentially 1,3-beta-glucans. May be involved in pollen tube wall re-formation during germination. This Olea europaea (Common olive) protein is Major pollen allergen Ole e 10.